The chain runs to 856 residues: DNA mismatch repair protein MutS (856 aa).

An ATP-binding site is contributed by 600 to 607 (GPNMSGKS).

It belongs to the DNA mismatch repair MutS family.

This protein is involved in the repair of mismatches in DNA. It is possible that it carries out the mismatch recognition step. This protein has a weak ATPase activity. This Lactobacillus acidophilus (strain ATCC 700396 / NCK56 / N2 / NCFM) protein is DNA mismatch repair protein MutS.